A 343-amino-acid polypeptide reads, in one-letter code: Anthranilate phosphoribosyltransferase (343 aa).

Residues Gly84, 87–88, Thr92, 94–97, 112–120, and Ser124 contribute to the 5-phospho-alpha-D-ribose 1-diphosphate site; these read GD, NIST, and KHGNRGVSS. An anthranilate-binding site is contributed by Gly84. Ser96 serves as a coordination point for Mg(2+). Asn115 contributes to the anthranilate binding site. Residue Arg170 coordinates anthranilate. 2 residues coordinate Mg(2+): Asp229 and Glu230.

This sequence belongs to the anthranilate phosphoribosyltransferase family. As to quaternary structure, homodimer. Mg(2+) serves as cofactor.

The enzyme catalyses N-(5-phospho-beta-D-ribosyl)anthranilate + diphosphate = 5-phospho-alpha-D-ribose 1-diphosphate + anthranilate. The protein operates within amino-acid biosynthesis; L-tryptophan biosynthesis; L-tryptophan from chorismate: step 2/5. Catalyzes the transfer of the phosphoribosyl group of 5-phosphorylribose-1-pyrophosphate (PRPP) to anthranilate to yield N-(5'-phosphoribosyl)-anthranilate (PRA). This chain is Anthranilate phosphoribosyltransferase, found in Burkholderia ambifaria (strain ATCC BAA-244 / DSM 16087 / CCUG 44356 / LMG 19182 / AMMD) (Burkholderia cepacia (strain AMMD)).